The primary structure comprises 983 residues: UPF0746 protein DDB_G0280809 (983 aa).

Positions 1–21 are enriched in basic and acidic residues; sequence MISNKRKEIDTINEHHEKNND. The interval 1-26 is disordered; sequence MISNKRKEIDTINEHHEKNNDDSDGI. An SAP domain is found at 42-76; that stretch reads SGSTNYRELQIIAKSLGLASNGKKQLVYNRIEGYF. A disordered region spans residues 391 to 413; that stretch reads HTTPTSTSTSTSTSTSTYTSTST. Over residues 392–413 the composition is skewed to low complexity; it reads TTPTSTSTSTSTSTSTYTSTST.

It belongs to the UPF0746 family.

The polypeptide is UPF0746 protein DDB_G0280809 (Dictyostelium discoideum (Social amoeba)).